The sequence spans 625 residues: Interleukin-1 receptor-associated kinase-like 2 (625 aa).

One can recognise a Death domain in the interval 13–94 (LDDPCRNMDA…RAAQIILNWK (82 aa)). The interval 111–181 (KPEKPLAASV…SSDSKDFSTS (71 aa)) is disordered. Serine 144 carries the post-translational modification Phosphoserine. Positions 169–181 (LPTSSDSKDFSTS) are enriched in polar residues. One can recognise a Protein kinase domain in the interval 210–503 (FNQNHKISQG…GSVAAVEEWL (294 aa)). ATP-binding positions include 216–224 (ISQGTFADV), lysine 237, and 337–340 (KSSN). The interval 513–539 (SGLSEGTGSSSNTPEETDDVDNSSLDA) is disordered. Residues 516 to 526 (SEGTGSSSNTP) show a composition bias toward polar residues.

Belongs to the protein kinase superfamily. TKL Ser/Thr protein kinase family. Pelle subfamily. As to quaternary structure, interacts with MYD88. IL-1 stimulation leads to the formation of a signaling complex which dissociates from the IL-1 receptor following the binding of PELI1.

Binds to the IL-1 type I receptor following IL-1 engagement, triggering intracellular signaling cascades leading to transcriptional up-regulation and mRNA stabilization. The polypeptide is Interleukin-1 receptor-associated kinase-like 2 (IRAK2) (Pongo abelii (Sumatran orangutan)).